The sequence spans 258 residues: L-aspartate dehydrogenase 1 (258 aa).

Ala121 and Asn181 together coordinate NAD(+). His211 is an active-site residue.

The protein belongs to the L-aspartate dehydrogenase family.

The enzyme catalyses L-aspartate + NADP(+) + H2O = oxaloacetate + NH4(+) + NADPH + H(+). The catalysed reaction is L-aspartate + NAD(+) + H2O = oxaloacetate + NH4(+) + NADH + H(+). The protein operates within cofactor biosynthesis; NAD(+) biosynthesis; iminoaspartate from L-aspartate (dehydrogenase route): step 1/1. Its function is as follows. Specifically catalyzes the NAD or NADP-dependent dehydrogenation of L-aspartate to iminoaspartate. The chain is L-aspartate dehydrogenase 1 from Bordetella bronchiseptica (strain ATCC BAA-588 / NCTC 13252 / RB50) (Alcaligenes bronchisepticus).